Here is a 210-residue protein sequence, read N- to C-terminus: Probable GTP-binding protein EngB (210 aa).

The EngB-type G domain occupies 30–204; it reads QGYEVAFAGR…YKVLAGWMEL (175 aa). GTP is bound by residues 38-45, 64-68, 82-85, 149-152, and 182-185; these read GRSNAGKS, GRTQL, DLPG, TKAD, and LFSA. Mg(2+) contacts are provided by serine 45 and threonine 66.

This sequence belongs to the TRAFAC class TrmE-Era-EngA-EngB-Septin-like GTPase superfamily. EngB GTPase family. It depends on Mg(2+) as a cofactor.

In terms of biological role, necessary for normal cell division and for the maintenance of normal septation. This Pseudomonas putida (strain W619) protein is Probable GTP-binding protein EngB.